The sequence spans 270 residues: Formamidopyrimidine-DNA glycosylase (270 aa).

The Schiff-base intermediate with DNA role is filled by Pro2. The active-site Proton donor is the Glu3. Residue Lys58 is the Proton donor; for beta-elimination activity of the active site. DNA is bound by residues His91, Arg110, and Lys151. An FPG-type zinc finger spans residues 236–270 (FAYGRGGQPCKVCGTTLREIKLGQRASVYCPKCQR). The active-site Proton donor; for delta-elimination activity is Arg260.

The protein belongs to the FPG family. Monomer. Zn(2+) serves as cofactor.

It catalyses the reaction Hydrolysis of DNA containing ring-opened 7-methylguanine residues, releasing 2,6-diamino-4-hydroxy-5-(N-methyl)formamidopyrimidine.. It carries out the reaction 2'-deoxyribonucleotide-(2'-deoxyribose 5'-phosphate)-2'-deoxyribonucleotide-DNA = a 3'-end 2'-deoxyribonucleotide-(2,3-dehydro-2,3-deoxyribose 5'-phosphate)-DNA + a 5'-end 5'-phospho-2'-deoxyribonucleoside-DNA + H(+). Involved in base excision repair of DNA damaged by oxidation or by mutagenic agents. Acts as a DNA glycosylase that recognizes and removes damaged bases. Has a preference for oxidized purines, such as 7,8-dihydro-8-oxoguanine (8-oxoG). Has AP (apurinic/apyrimidinic) lyase activity and introduces nicks in the DNA strand. Cleaves the DNA backbone by beta-delta elimination to generate a single-strand break at the site of the removed base with both 3'- and 5'-phosphates. The chain is Formamidopyrimidine-DNA glycosylase from Pseudomonas syringae pv. tomato (strain ATCC BAA-871 / DC3000).